A 498-amino-acid chain; its full sequence is ATP synthase subunit beta, chloroplastic (498 aa).

Residue 172–179 (GGAGVGKT) coordinates ATP.

The protein belongs to the ATPase alpha/beta chains family. F-type ATPases have 2 components, CF(1) - the catalytic core - and CF(0) - the membrane proton channel. CF(1) has five subunits: alpha(3), beta(3), gamma(1), delta(1), epsilon(1). CF(0) has four main subunits: a(1), b(1), b'(1) and c(9-12).

The protein localises to the plastid. It localises to the chloroplast thylakoid membrane. It carries out the reaction ATP + H2O + 4 H(+)(in) = ADP + phosphate + 5 H(+)(out). Its function is as follows. Produces ATP from ADP in the presence of a proton gradient across the membrane. The catalytic sites are hosted primarily by the beta subunits. This chain is ATP synthase subunit beta, chloroplastic, found in Oenothera biennis (German evening primrose).